The sequence spans 372 residues: Tetraacyldisaccharide 4'-kinase (372 aa).

Residue 65 to 72 (TVGGTGKT) participates in ATP binding. A disordered region spans residues 351–372 (QSTATGMADGLDKEHQDGQPAA). The segment covering 360–372 (GLDKEHQDGQPAA) has biased composition (basic and acidic residues).

Belongs to the LpxK family.

It carries out the reaction a lipid A disaccharide + ATP = a lipid IVA + ADP + H(+). Its pathway is glycolipid biosynthesis; lipid IV(A) biosynthesis; lipid IV(A) from (3R)-3-hydroxytetradecanoyl-[acyl-carrier-protein] and UDP-N-acetyl-alpha-D-glucosamine: step 6/6. Its function is as follows. Transfers the gamma-phosphate of ATP to the 4'-position of a tetraacyldisaccharide 1-phosphate intermediate (termed DS-1-P) to form tetraacyldisaccharide 1,4'-bis-phosphate (lipid IVA). The chain is Tetraacyldisaccharide 4'-kinase from Cupriavidus metallidurans (strain ATCC 43123 / DSM 2839 / NBRC 102507 / CH34) (Ralstonia metallidurans).